The chain runs to 59 residues: Large ribosomal subunit protein uL30 (59 aa).

It belongs to the universal ribosomal protein uL30 family. In terms of assembly, part of the 50S ribosomal subunit.

The polypeptide is Large ribosomal subunit protein uL30 (Leptospira interrogans serogroup Icterohaemorrhagiae serovar copenhageni (strain Fiocruz L1-130)).